Consider the following 285-residue polypeptide: MMASMAALLQRLLVVVNQVDPGAPGFWREFLVGMLKPVAATAVVAMAVALSFTQRLGLEGEMLYAMARAFLQLSVIGFVLQFIFTQKSAAWILLAYLFMVTVAGYTAGQRARHVPRGKHIAAVSILAGTSVTMALLVALRVFPFTPRYIIPVAGMMVGNAMTVTGVTMKKLREDVGMQRGVVETALALGATPRQATARQVRRSLVIALSPVIDNAKTVGLIALPGAMTGLIMGGASPLEAIQLQIVVMNMLMGASTVSSILSTYLCWPAFFTGAFQLNDAVFAAD.

7 helical membrane-spanning segments follow: residues 30–50 (FLVG…AVAL), 64–84 (YAMA…QFIF), 88–108 (SAAW…YTAG), 119–139 (HIAA…LVAL), 148–168 (YIIP…GVTM), 203–225 (SLVI…ALPG), and 240–262 (AIQL…SILS).

It belongs to the UPF0014 family. As to quaternary structure, interacts with STAR2. Expressed in roots.

The protein resides in the membrane. Functionally, associates with STAR2 to form a functional transmembrane ABC transporter required for detoxification of aluminum (Al) in roots. Can specifically transport UDP-glucose. The chain is UPF0014 membrane protein STAR2 from Oryza sativa subsp. japonica (Rice).